Here is a 213-residue protein sequence, read N- to C-terminus: Kynurenine formamidase (213 aa).

Tryptophan 20 lines the substrate pocket. Residues histidine 50, histidine 54, and aspartate 56 each coordinate Zn(2+). Histidine 60 functions as the Proton donor/acceptor in the catalytic mechanism. Residues histidine 161 and glutamate 173 each coordinate Zn(2+).

The protein belongs to the Cyclase 1 superfamily. KynB family. As to quaternary structure, homodimer. Zn(2+) is required as a cofactor.

The catalysed reaction is N-formyl-L-kynurenine + H2O = L-kynurenine + formate + H(+). Its pathway is amino-acid degradation; L-tryptophan degradation via kynurenine pathway; L-kynurenine from L-tryptophan: step 2/2. In terms of biological role, catalyzes the hydrolysis of N-formyl-L-kynurenine to L-kynurenine, the second step in the kynurenine pathway of tryptophan degradation. The sequence is that of Kynurenine formamidase from Pseudomonas paraeruginosa (strain DSM 24068 / PA7) (Pseudomonas aeruginosa (strain PA7)).